The primary structure comprises 383 residues: Lipid-A-disaccharide synthase (383 aa).

Belongs to the LpxB family.

It carries out the reaction 2-N,3-O-bis[(3R)-3-hydroxytetradecanoyl]-alpha-D-glucosaminyl 1-phosphate + UDP-2-N,3-O-bis[(3R)-3-hydroxytetradecanoyl]-alpha-D-glucosamine = lipid A disaccharide (E. coli) + UDP + H(+). It catalyses the reaction a lipid X + a UDP-2-N,3-O-bis[(3R)-3-hydroxyacyl]-alpha-D-glucosamine = a lipid A disaccharide + UDP + H(+). Its pathway is glycolipid biosynthesis; lipid IV(A) biosynthesis; lipid IV(A) from (3R)-3-hydroxytetradecanoyl-[acyl-carrier-protein] and UDP-N-acetyl-alpha-D-glucosamine: step 5/6. Functionally, condensation of UDP-2,3-diacylglucosamine and 2,3-diacylglucosamine-1-phosphate to form lipid A disaccharide, a precursor of lipid A, a phosphorylated glycolipid that anchors the lipopolysaccharide to the outer membrane of the cell. This Pectobacterium atrosepticum (strain SCRI 1043 / ATCC BAA-672) (Erwinia carotovora subsp. atroseptica) protein is Lipid-A-disaccharide synthase.